A 530-amino-acid chain; its full sequence is Glucose-6-phosphate isomerase (530 aa).

Glu322 acts as the Proton donor in catalysis. Active-site residues include His351 and Lys455.

Belongs to the GPI family.

Its subcellular location is the cytoplasm. It carries out the reaction alpha-D-glucose 6-phosphate = beta-D-fructose 6-phosphate. The protein operates within carbohydrate biosynthesis; gluconeogenesis. It participates in carbohydrate degradation; glycolysis; D-glyceraldehyde 3-phosphate and glycerone phosphate from D-glucose: step 2/4. In terms of biological role, catalyzes the reversible isomerization of glucose-6-phosphate to fructose-6-phosphate. This Citrifermentans bemidjiense (strain ATCC BAA-1014 / DSM 16622 / JCM 12645 / Bem) (Geobacter bemidjiensis) protein is Glucose-6-phosphate isomerase.